Reading from the N-terminus, the 443-residue chain is Transcription factor E2F2 (443 aa).

The tract at residues 1 to 22 (MLRAPRTLAPATAQPTKSLPAL) is disordered. Residues 67-107 (ATPHGPEGQIVRCAPAGRLPAKRKLDLEGIGRPTVPEFRTP) form a cyclin A/CDK2 binding region. The DNA-binding element occupies 109–198 (GKCIRVDGLP…KNNIQWVGRE (90 aa)). The leucine-zipper stretch occupies residues 157 to 178 (LNWAAEVLDVQKRRIYDITNVL). The DEF box signature appears at 162 to 198 (EVLDVQKRRIYDITNVLEGIQLIRKKSKNNIQWVGRE). Residues 199–291 (LFEDPTRPSR…PDRAEENLQI (93 aa)) form a dimerization region. The segment at 306 to 341 (PEEGQEPDSPAKEALPSTSALSPIPDCAQPGCSTDS) is disordered. The interval 361 to 443 (PPPPLPPAPS…SYDLGDLLIN (83 aa)) is transactivation. The interval 416-433 (DEYLWGMDEGEGISDLFD) is retinoblastoma protein binding.

This sequence belongs to the E2F/DP family. As to quaternary structure, component of the DRTF1/E2F transcription factor complex. Forms heterodimers with DP family members. The E2F2 complex binds specifically hypophosphorylated retinoblastoma protein RB1. During the cell cycle, RB1 becomes phosphorylated in mid-to-late G1 phase, detaches from the DRTF1/E2F complex, rendering E2F transcriptionally active. Viral oncoproteins, notably E1A, T-antigen and HPV E7, are capable of sequestering RB protein, thus releasing the active complex. Binds EAPP. Post-translationally, phosphorylated by CDK2 and cyclin A-CDK2 in the S-phase.

It is found in the nucleus. In terms of biological role, transcription activator that binds DNA cooperatively with DP proteins through the E2 recognition site, 5'-TTTC[CG]CGC-3' found in the promoter region of a number of genes whose products are involved in cell cycle regulation or in DNA replication. The DRTF1/E2F complex functions in the control of cell-cycle progression from g1 to s phase. E2F2 binds specifically to RB1 in a cell-cycle dependent manner. In Mus musculus (Mouse), this protein is Transcription factor E2F2 (E2f2).